We begin with the raw amino-acid sequence, 54 residues long: uncharacterized protein (54 aa).

Residues 13 to 54 (VAGDSGGNPENISIGTTSGAVVNKGPEQIPKKKKEESKEKEE) are disordered. Polar residues predominate over residues 20-32 (NPENISIGTTSGA). Residues 41 to 54 (IPKKKKEESKEKEE) show a composition bias toward basic and acidic residues.

This is an uncharacterized protein from Enterobacteria phage T4 (Bacteriophage T4).